The chain runs to 160 residues: MAKIVLCMVLLAFGRQVYGASLVPAPISEQDPELATCELQLSKYRRFILQAILSFEDVCDAYSSRPGGQDSDSEGWPFRHYAPPPTSQRGEIWAFFRLLMAQFGDKEFSPIIRDAVIERCRIKSQLQRDEKRNSVVLGKKQRFHSWGGKRSPEPPILPDY.

The first 19 residues, 1–19, serve as a signal peptide directing secretion; the sequence is MAKIVLCMVLLAFGRQVYG. A propeptide spanning residues 20–130 is cleaved from the precursor; sequence ASLVPAPISE…RIKSQLQRDE (111 aa). The residue at position 147 (G147) is a Glycine amide. A propeptide spanning residues 151-160 is cleaved from the precursor; it reads SPEPPILPDY.

The protein resides in the secreted. In terms of biological role, acts through intracellular calcium in Malpighian tubule stellate cells to raise chloride conductance. The polypeptide is Leucokinin (Lk) (Drosophila melanogaster (Fruit fly)).